Here is a 435-residue protein sequence, read N- to C-terminus: Glutamate-1-semialdehyde 2,1-aminomutase (435 aa).

K266 carries the post-translational modification N6-(pyridoxal phosphate)lysine.

Belongs to the class-III pyridoxal-phosphate-dependent aminotransferase family. HemL subfamily. Homodimer. Pyridoxal 5'-phosphate is required as a cofactor.

It is found in the cytoplasm. It catalyses the reaction (S)-4-amino-5-oxopentanoate = 5-aminolevulinate. It participates in porphyrin-containing compound metabolism; protoporphyrin-IX biosynthesis; 5-aminolevulinate from L-glutamyl-tRNA(Glu): step 2/2. The polypeptide is Glutamate-1-semialdehyde 2,1-aminomutase (Coxiella burnetii (strain CbuG_Q212) (Coxiella burnetii (strain Q212))).